The sequence spans 1487 residues: Chromosome partition protein MukB (1487 aa).

34-41 contributes to the ATP binding site; the sequence is GGNGAGKS. 6 coiled-coil regions span residues 297–458, 506–601, 637–666, 781–806, 836–1109, and 1210–1266; these read GSRE…TNAL, RESQ…LEAI, LEQEKELSLAKDKLAERRSQLESEIERLAS, RAAREQRLELLRNEREEVVEKHAKAA, EQAL…ELRT, and VEAI…LSNI. The flexible hinge stretch occupies residues 667–784; sequence PGGSNDPRLK…EIPLFGRAAR (118 aa).

This sequence belongs to the SMC family. MukB subfamily. As to quaternary structure, homodimerization via its hinge domain. Binds to DNA via its C-terminal region. Interacts, and probably forms a ternary complex, with MukE and MukF via its C-terminal region. The complex formation is stimulated by calcium or magnesium. Interacts with tubulin-related protein FtsZ.

The protein localises to the cytoplasm. Its subcellular location is the nucleoid. Plays a central role in chromosome condensation, segregation and cell cycle progression. Functions as a homodimer, which is essential for chromosome partition. Involved in negative DNA supercoiling in vivo, and by this means organize and compact chromosomes. May achieve or facilitate chromosome segregation by condensation DNA from both sides of a centrally located replisome during cell division. This Vibrio parahaemolyticus serotype O3:K6 (strain RIMD 2210633) protein is Chromosome partition protein MukB.